The sequence spans 445 residues: Phosphoglucosamine mutase (445 aa).

S102 acts as the Phosphoserine intermediate in catalysis. S102, D241, D243, and D245 together coordinate Mg(2+). S102 carries the post-translational modification Phosphoserine.

It belongs to the phosphohexose mutase family. The cofactor is Mg(2+). In terms of processing, activated by phosphorylation.

The enzyme catalyses alpha-D-glucosamine 1-phosphate = D-glucosamine 6-phosphate. Functionally, catalyzes the conversion of glucosamine-6-phosphate to glucosamine-1-phosphate. The protein is Phosphoglucosamine mutase of Shewanella piezotolerans (strain WP3 / JCM 13877).